The primary structure comprises 427 residues: Citrate synthase (427 aa).

Active-site residues include histidine 306 and aspartate 363.

It belongs to the citrate synthase family. As to quaternary structure, homohexamer.

The enzyme catalyses oxaloacetate + acetyl-CoA + H2O = citrate + CoA + H(+). Its pathway is carbohydrate metabolism; tricarboxylic acid cycle; isocitrate from oxaloacetate: step 1/2. Its activity is regulated as follows. Allosterically inhibited by NADH. This chain is Citrate synthase (gltA), found in Salmonella typhimurium (strain LT2 / SGSC1412 / ATCC 700720).